Consider the following 277-residue polypeptide: Large ribosomal subunit protein uL2 (277 aa).

The segment at 219 to 277 (TVRGSVMNPNDHPHGGGEGRSPIGHPSPRTPWGKPALGYKTRKNKKYSDRFIVKRRHDK) is disordered.

The protein belongs to the universal ribosomal protein uL2 family. As to quaternary structure, part of the 50S ribosomal subunit. Forms a bridge to the 30S subunit in the 70S ribosome.

One of the primary rRNA binding proteins. Required for association of the 30S and 50S subunits to form the 70S ribosome, for tRNA binding and peptide bond formation. It has been suggested to have peptidyltransferase activity; this is somewhat controversial. Makes several contacts with the 16S rRNA in the 70S ribosome. This chain is Large ribosomal subunit protein uL2, found in Clostridium botulinum (strain 657 / Type Ba4).